The primary structure comprises 323 residues: tRNA N6-adenosine threonylcarbamoyltransferase (323 aa).

Residues H110 and H114 each contribute to the Fe cation site. Substrate-binding positions include 131-135, D164, G177, and N264; that span reads VASGG. D288 is a binding site for Fe cation.

Belongs to the KAE1 / TsaD family. The cofactor is Fe(2+).

The protein resides in the cytoplasm. It carries out the reaction L-threonylcarbamoyladenylate + adenosine(37) in tRNA = N(6)-L-threonylcarbamoyladenosine(37) in tRNA + AMP + H(+). Required for the formation of a threonylcarbamoyl group on adenosine at position 37 (t(6)A37) in tRNAs that read codons beginning with adenine. Is involved in the transfer of the threonylcarbamoyl moiety of threonylcarbamoyl-AMP (TC-AMP) to the N6 group of A37, together with TsaE and TsaB. TsaD likely plays a direct catalytic role in this reaction. The chain is tRNA N6-adenosine threonylcarbamoyltransferase from Thermus thermophilus (strain ATCC BAA-163 / DSM 7039 / HB27).